A 419-amino-acid polypeptide reads, in one-letter code: Ribosomal RNA large subunit methyltransferase G (419 aa).

Basic and acidic residues predominate over residues 386–408; sequence KAEPFETHPTEAEAKVEVTESKP. Positions 386–419 are disordered; that stretch reads KAEPFETHPTEAEAKVEVTESKPHPQSSLYGTKK. The span at 409-419 shows a compositional bias: polar residues; sequence HPQSSLYGTKK.

This sequence belongs to the methyltransferase superfamily. RlmG family.

It localises to the cytoplasm. The catalysed reaction is guanosine(1835) in 23S rRNA + S-adenosyl-L-methionine = N(2)-methylguanosine(1835) in 23S rRNA + S-adenosyl-L-homocysteine + H(+). In terms of biological role, specifically methylates the guanine in position 1835 (m2G1835) of 23S rRNA. This is Ribosomal RNA large subunit methyltransferase G from Shewanella woodyi (strain ATCC 51908 / MS32).